The chain runs to 1341 residues: WD repeat-containing protein 19 (1341 aa).

WD repeat units follow at residues 11-51 (SWLG…RSEI), 52-92 (SLPG…TSQL), 95-134 (GMRD…KIPV), 137-175 (KHTK…IRQT), 273-311 (DHKD…DMYA), and 317-356 (DENK…LGDA). TPR repeat units lie at residues 736-769 (AQDL…AKRL), 775-808 (PFIS…DNKE), 840-873 (RVLK…DRAA), 895-928 (PKIH…NSVI), 951-984 (LDGA…NEAF), and 1020-1053 (EKRH…EDNV).

As to quaternary structure, component of the IFT complex A (IFT-A) complex. IFT-A complex is divided into a core subcomplex composed of IFT122:IFT140:WDR19 which is associated with TULP3 and a peripheral subcomplex composed of IFT43:WDR35:TTC21B. Interacts (via C-terminal region) with IFT122 (via C-terminal region). Interacts with BBS1. Interacts with TTC25. Tissue-specific expression of isoforms. Expressed in the prostate, testis, epididymis, submaxillary and salivary glands. Expressed in ependymal cells lining brain ventricles (at protein level).

It is found in the cell projection. Its subcellular location is the cilium. It localises to the cytoplasm. The protein resides in the cytoskeleton. The protein localises to the cilium basal body. It is found in the photoreceptor outer segment. Its subcellular location is the flagellum. Functionally, as component of the IFT complex A (IFT-A), a complex required for retrograde ciliary transport and entry into cilia of G protein-coupled receptors (GPCRs), it is involved in cilia function and/or assembly. Essential for functional IFT-A assembly and ciliary entry of GPCRs. Associates with the BBSome complex to mediate ciliary transport. In Mus musculus (Mouse), this protein is WD repeat-containing protein 19.